The following is a 150-amino-acid chain: Sec-independent protein translocase protein TatB (150 aa).

Residues 1-21 (MFDLSWSEIALVGVVALIVIG) form a helical membrane-spanning segment. Over residues 77 to 86 (KIDQAIDPDG) the composition is skewed to basic and acidic residues. The interval 77-150 (KIDQAIDPDG…RTDGSLPPQD (74 aa)) is disordered. A compositionally biased stretch (pro residues) spans 109–135 (AAPPSLPPQAPAQPVPPATGAAPPSPS).

It belongs to the TatB family. The Tat system comprises two distinct complexes: a TatABC complex, containing multiple copies of TatA, TatB and TatC subunits, and a separate TatA complex, containing only TatA subunits. Substrates initially bind to the TatABC complex, which probably triggers association of the separate TatA complex to form the active translocon.

It is found in the cell inner membrane. Part of the twin-arginine translocation (Tat) system that transports large folded proteins containing a characteristic twin-arginine motif in their signal peptide across membranes. Together with TatC, TatB is part of a receptor directly interacting with Tat signal peptides. TatB may form an oligomeric binding site that transiently accommodates folded Tat precursor proteins before their translocation. The polypeptide is Sec-independent protein translocase protein TatB (Rhodospirillum rubrum (strain ATCC 11170 / ATH 1.1.1 / DSM 467 / LMG 4362 / NCIMB 8255 / S1)).